A 395-amino-acid polypeptide reads, in one-letter code: uncharacterized protein (395 aa).

Disordered stretches follow at residues 185–282 (RREV…SSTA) and 316–372 (GSST…TCSS). The segment covering 248–257 (LHLRTRHPHR) has biased composition (basic residues). Low complexity predominate over residues 342-360 (ARASTHSRSSPSASANSRY).

This is an uncharacterized protein from Streptomyces fradiae (Streptomyces roseoflavus).